The sequence spans 489 residues: MGGGNSKEESSSPSSSSWASHQSYPQYGPDSYNYPPPPTYAPAPSPAPAPAPVPAPSPASSYGPQYSQEGYASQPNNPPPPTYAPAPSPASSYGHQYSQEGYASAASQPNYPPPPSQSQVADRKKFDRRYSKISDNYSSLLQVSEALGRAGLESSNLIVGIDFTKSNEWTGAKSFNRKSLHHLSNTPNPYEQAITIIGRTLAAFDEDNLIPCYGFGDASTHDQDVFSFYPEGRFCNGFEEVLARYREIVPQLKLAGPTSFAPIIEMAMTVVEQSSGQYHVLVIIADGQVTRSVDTEHGRLSPQEQKTVDAIVKASTLPLSIVLVGVGDGPWDMMQEFDDNIPARAFDNFQFVNFTEIMSKNKDQSRKETEFALSALMEIPPQYKATIELNLLGVRNGNIPQRIPLPPPVQSGSSFSSSRIPNFEPSVPPYPFESKQMSSADDIQLCPICLSNPKNMAFGCGHQTCCECGPDLKVCPICRAPIQTRIKLY.

The span at 1–10 (MGGGNSKEES) shows a compositional bias: basic and acidic residues. Residues 1–125 (MGGGNSKEES…SQSQVADRKK (125 aa)) are disordered. G2 carries N-myristoyl glycine lipidation. The segment covering 11 to 23 (SSPSSSSWASHQS) has biased composition (low complexity). The span at 34 to 57 (YPPPPTYAPAPSPAPAPAPVPAPS) shows a compositional bias: pro residues. The span at 58-75 (PASSYGPQYSQEGYASQP) shows a compositional bias: low complexity. Residues 76–88 (NNPPPPTYAPAPS) show a composition bias toward pro residues. Positions 156–376 (NLIVGIDFTK…KETEFALSAL (221 aa)) constitute a VWFA domain. The segment at 446-479 (CPICLSNPKNMAFGCGHQTCCECGPDLKVCPICR) adopts an RING-type zinc-finger fold.

Interacts with the heterodimer UBC35/UEV1B. Interacts with ERF053. Interacts with PP2CA. Post-translationally, N-myristoylated. Ubiquitously expressed.

It is found in the cell membrane. It localises to the nucleus. It carries out the reaction S-ubiquitinyl-[E2 ubiquitin-conjugating enzyme]-L-cysteine + [acceptor protein]-L-lysine = [E2 ubiquitin-conjugating enzyme]-L-cysteine + N(6)-ubiquitinyl-[acceptor protein]-L-lysine.. Functionally, E3 ubiquitin-protein ligase that mediates the formation of 'Lys-63'-linked ubiquitin chains. Regulates apical dominance by acting on the auxin transport proteins abundance. Together with RGLG5, mediates the ubiquitination and subsequent proteasomal degradation of the target protein PP2CA. Functions as a positive regulator of abscisic acid (ABA) signaling through ABA-dependent degradation of PP2CA, a major inhibitor of ABA signaling. Acts as a negative regulator of drought stress response. This chain is E3 ubiquitin-protein ligase RGLG1, found in Arabidopsis thaliana (Mouse-ear cress).